Reading from the N-terminus, the 444-residue chain is C4-dicarboxylate transport protein 2 (444 aa).

Transmembrane regions (helical) follow at residues 23–43 (ILYVQVLAAIVLGVIVGWLWP), 61–81 (LIKMAIAPIIFCTVVSGIAHI), 95–115 (LVYFEVVSTFALALGLVVANV), 162–182 (GEILQVLLFAILFGFALMGLG), 198–218 (AMFGVISIVVKVAPIGAFGAM), and 236–256 (LIATFYLTAFLFVVVGLGIIA).

The protein belongs to the dicarboxylate/amino acid:cation symporter (DAACS) (TC 2.A.23) family.

The protein localises to the cell inner membrane. Its function is as follows. Responsible for the transport of dicarboxylates such as succinate, fumarate, and malate from the periplasm across the membrane. In Bradyrhizobium diazoefficiens (strain JCM 10833 / BCRC 13528 / IAM 13628 / NBRC 14792 / USDA 110), this protein is C4-dicarboxylate transport protein 2.